The following is a 902-amino-acid chain: Proline-rich transmembrane protein 4 (902 aa).

The first 18 residues, 1–18 (MAGRGCLELGLFCWVLLA), serve as a signal peptide directing secretion. Disordered regions lie at residues 120-149 (FTPW…SQPR) and 262-337 (PPPL…SGQP). Over residues 125 to 139 (SSLPPESTSPLSGPT) the composition is skewed to low complexity. The segment covering 271 to 301 (SSPSPLDSVASPSSASIKTTPVQHDPTVSTS) has biased composition (polar residues). 5 helical membrane passes run 371–391 (AGAL…LLPW), 393–413 (CPPG…AGTT), 431–451 (ALAW…GLGL), 465–485 (PIGL…AALG), and 501–521 (GLHA…SCWG). Phosphoserine is present on serine 642. 3 disordered regions span residues 700-721 (GARA…TVDF), 771-811 (KTGA…SLCG), and 836-872 (VLSP…ASEL). The segment covering 703–717 (ANTTQSPASSPSSDC) has biased composition (polar residues). Over residues 786 to 798 (SPAPPELPSPGAW) the composition is skewed to pro residues. Composition is skewed to low complexity over residues 799–811 (PPGS…SLCG) and 843–854 (SESSPSLPASGS).

It localises to the membrane. The protein is Proline-rich transmembrane protein 4 (Prrt4) of Rattus norvegicus (Rat).